Consider the following 356-residue polypeptide: tRNA pseudouridine synthase D (356 aa).

Asp-84 serves as the catalytic Nucleophile. Positions 159–302 (GVPNYYGPQR…RRGARRPIRV (144 aa)) constitute a TRUD domain.

The protein belongs to the pseudouridine synthase TruD family.

It catalyses the reaction uridine(13) in tRNA = pseudouridine(13) in tRNA. Its function is as follows. Responsible for synthesis of pseudouridine from uracil-13 in transfer RNAs. The chain is tRNA pseudouridine synthase D from Thermus thermophilus (strain ATCC BAA-163 / DSM 7039 / HB27).